The sequence spans 119 residues: Fluoride-specific ion channel FluC (119 aa).

The next 3 helical transmembrane spans lie at 37–54, 61–83, and 93–112; these read LFANWTGALLIGIFAETV, LLLITGFLGSLTTLSGFSLETVT, and ALSNIFLHTAGSLLLTWLGL. Gly-69 and Thr-72 together coordinate Na(+).

It belongs to the fluoride channel Fluc/FEX (TC 1.A.43) family.

Its subcellular location is the cell inner membrane. The enzyme catalyses fluoride(in) = fluoride(out). Its activity is regulated as follows. Na(+) is not transported, but it plays an essential structural role and its presence is essential for fluoride channel function. Fluoride-specific ion channel. Important for reducing fluoride concentration in the cell, thus reducing its toxicity. The protein is Fluoride-specific ion channel FluC of Neisseria meningitidis serogroup C (strain 053442).